Reading from the N-terminus, the 54-residue chain is Large ribosomal subunit protein bL33C (54 aa).

The protein belongs to the bacterial ribosomal protein bL33 family.

This chain is Large ribosomal subunit protein bL33C (rpmG3), found in Streptomyces coelicolor (strain ATCC BAA-471 / A3(2) / M145).